A 313-amino-acid polypeptide reads, in one-letter code: Olfactory receptor 5H1 (313 aa).

Topologically, residues 1 to 28 (MEEENATLLTEFVLTGFLYQPQWKIPLF) are extracellular. Asn-5 carries an N-linked (GlcNAc...) asparagine glycan. The helical transmembrane segment at 29–49 (LAFLVIYLITIMGNLGLIAVI) threads the bilayer. Topologically, residues 50–56 (WKDPHLH) are cytoplasmic. The helical transmembrane segment at 57–77 (IPMYLLLGNLAFVDAWISSTV) threads the bilayer. At 78 to 98 (TPKMLNNFLAKSKMISLSECK) the chain is on the extracellular side. Cys-97 and Cys-179 are disulfide-bonded. Residues 99–119 (IQFFSFAISVTTECFLLATMA) traverse the membrane as a helical segment. At 120–143 (YDRYVAICKPLLYPAIMTNGLCIR) the chain is on the cytoplasmic side. Residues 144–164 (LLILSYVGGILHALIHEGFLF) traverse the membrane as a helical segment. Residues 165-195 (RLTFCNSNIVHHIYCDTIPLSKISCTDSSIN) are Extracellular-facing. A helical membrane pass occupies residues 196-216 (FLMVFIFSGSIQVFSIVTILV). The Cytoplasmic segment spans residues 217 to 240 (SYTFVLFAILKKKSDKGVRKAFST). A helical transmembrane segment spans residues 241–261 (CGAHLFSVSLYYGPLLFIYVG). The Extracellular portion of the chain corresponds to 262–271 (PASPQADDQD). The chain crosses the membrane as a helical span at residues 272 to 292 (MVEPLFYTVIIPLLNPIIYSL). At 293 to 313 (RNKQVTVSFTKMLKKHVKVSY) the chain is on the cytoplasmic side.

It belongs to the G-protein coupled receptor 1 family.

It localises to the cell membrane. Functionally, odorant receptor. The chain is Olfactory receptor 5H1 (OR5H1) from Homo sapiens (Human).